The chain runs to 2173 residues: Mediator of DNA damage checkpoint protein 1 (2173 aa).

Acidic residues predominate over residues 1-19; it reads MEDTQAIDWDVEEEEETEQ. The disordered stretch occupies residues 1–22; it reads MEDTQAIDWDVEEEEETEQSSE. The segment at 1-150 is interaction with CHEK2; the sequence is MEDTQAIDWD…SRGPLTVEET (150 aa). The interaction with the MRN complex stretch occupies residues 2–222; the sequence is EDTQAIDWDV…PFAFNLNSDT (221 aa). Thr-4 carries the phosphothreonine modification. The 52-residue stretch at 54-105 folds into the FHA domain; it reads NVVGRMPDCSVALPFPSISKQHAEIEILAWDKAPILRDCGSLNGTQILRPPK. Position 108 is a phosphoserine (Ser-108). Residues 145–570 are required for nuclear localization (NLS1); the sequence is LTVEETPRVQ…PAKLLVVSLE (426 aa). Thr-146 carries the post-translational modification Phosphothreonine. 4 positions are modified to phosphoserine: Ser-168, Ser-176, Ser-198, and Ser-220. The interval 198–320 is disordered; the sequence is SDEEGHSPVL…PPGRPAEVHL (123 aa). A Phosphothreonine modification is found at Thr-222. The span at 227 to 244 shows a compositional bias: low complexity; the sequence is GQQSATEEASSAARRGAT. Over residues 259 to 276 the composition is skewed to basic and acidic residues; it reads QLEKDQPSVKERDNDTKV. Phosphoserine is present on Ser-301. Thr-303 carries the phosphothreonine modification. Positions 308-320 are enriched in basic and acidic residues; the sequence is DSRPPGRPAEVHL. Residue Ser-331 is modified to Phosphoserine. Thr-333 is subject to Phosphothreonine. The segment at 359–383 is disordered; that stretch reads GTRGPGAPGLSHLQESQAGSDTDVE. Phosphoserine occurs at positions 374 and 378. At Thr-380 the chain carries Phosphothreonine. Phosphoserine occurs at positions 396, 399, and 404. Residue Thr-406 is modified to Phosphothreonine. Ser-413 is modified (phosphoserine). Residues 444 to 515 form a disordered region; the sequence is LQRSQTTTGR…SSPGIHLERS (72 aa). Thr-451 is modified (phosphothreonine). Ser-455 is modified (phosphoserine). Residue Thr-457 is modified to Phosphothreonine. Residues Ser-487, Ser-497, Ser-500, Ser-506, Ser-507, and Ser-515 each carry the phosphoserine modification. A Phosphothreonine modification is found at Thr-525. Position 592 is a phosphoserine (Ser-592). Lys-618 participates in a covalent cross-link: Glycyl lysine isopeptide (Lys-Gly) (interchain with G-Cter in SUMO1); alternate. Residue Lys-618 forms a Glycyl lysine isopeptide (Lys-Gly) (interchain with G-Cter in SUMO2); alternate linkage. Residue Ser-631 is modified to Phosphoserine. Disordered regions lie at residues 652-697 and 773-1770; these read VDTD…EDPD and HLEA…TLRS. Over residues 673–687 the composition is skewed to basic and acidic residues; sequence GREREQHVGRTKDSE. Acidic residues predominate over residues 688–697; sequence DNCDDSEDPD. A phosphoserine mark is found at Ser-782 and Ser-795. Lys-814 carries the N6-acetyllysine modification. Basic and acidic residues-rich tracts occupy residues 821–846, 853–864, 870–903, and 916–953; these read ETAE…ERQT, ELTRGIQDREQK, DTQR…KEIQ, and AFER…RGEP. Phosphoserine occurs at positions 957, 1000, 1035, 1070, and 1088. Residues 957–969 are compositionally biased toward polar residues; sequence SQDQKGQASSPTS. The segment covering 1079 to 1090 has biased composition (basic and acidic residues); that stretch reads TIRKTGQDRSQE. Positions 1105–1115 are enriched in basic residues; sequence PKPKIITRKSS. Polar residues predominate over residues 1131-1156; the sequence is PSTSTAQPVTPKPTSQATRSRTNRSS. The interaction with the PRKDC complex stretch occupies residues 1150–1694; it reads SRTNRSSVKT…KNRSSVKTPE (545 aa). Residues 1157 to 1169 are compositionally biased toward low complexity; that stretch reads VKTPEPVVPTVPE. Thr-1159 carries the post-translational modification Phosphothreonine. Residues 1171-1189 are compositionally biased toward polar residues; sequence QPSTSTDQPVASEPTSQAT. A Phosphothreonine modification is found at Thr-1200. A Phosphoserine modification is found at Ser-1237. Residues Thr-1241, Thr-1282, and Thr-1304 each carry the phosphothreonine modification. The segment covering 1280–1292 has biased composition (low complexity); sequence VKTPEPVVPTVPE. Positions 1294-1320 are enriched in polar residues; that stretch reads QPSTSTDQPVTSEPTSQATRGRTNRSS. The span at 1321-1333 shows a compositional bias: low complexity; it reads VKTPEPVVPTVPE. A compositionally biased stretch (polar residues) spans 1335 to 1353; sequence QPSTSTDQPVASEPTSQAT. A compositionally biased stretch (low complexity) spans 1390-1402; it reads TSRTTRSRTNMSS. 4 stretches are compositionally biased toward polar residues: residues 1418–1434, 1456–1487, 1499–1527, and 1540–1559; these read PSTS…TYQP, KLQS…SVKS, QPST…SSVK, and QPST…QATR. A phosphoserine mark is found at Ser-1483 and Ser-1484. At Lys-1486 the chain carries N6-acetyllysine. Residues Thr-1509 and Thr-1550 each carry the phosphothreonine modification. Residues 1567 to 1578 are compositionally biased toward low complexity; sequence VKTPKIVVPTVP. The segment covering 1581–1598 has biased composition (polar residues); sequence QASTSTDQPVTSEPTSRT. Residues Thr-1617 and Thr-1632 each carry the phosphothreonine modification. Residues 1626-1639 are compositionally biased toward polar residues; that stretch reads STDQPITPKPTSRA. Ser-1648 is subject to Phosphoserine. 2 positions are modified to phosphothreonine: Thr-1651 and Thr-1673. Residues 1664-1680 are compositionally biased toward polar residues; that stretch reads PSTSRSQLVTPEPTSRA. A Phosphoserine modification is found at Ser-1688. Phosphothreonine is present on residues Thr-1692, Thr-1714, Thr-1748, and Thr-1755. Polar residues predominate over residues 1705–1721; sequence PTTSTDQPVTPKPTSRA. Residues 1761–1770 are compositionally biased toward polar residues; the sequence is QGSQSKTLRS. Ser-1765 carries the phosphoserine modification. Thr-1781 bears the Phosphothreonine mark. The interval 1782 to 2173 is required for nuclear localization (NLS2); that stretch reads PEFQSPVTTD…VLSPLEMSST (392 aa). 2 positions are modified to phosphoserine: Ser-1786 and Ser-1795. Residues 1809 to 1971 form a disordered region; the sequence is RATGNPGSLT…NRSLRRTKLN (163 aa). A Glycyl lysine isopeptide (Lys-Gly) (interchain with G-Cter in SUMO2) cross-link involves residue Lys-1824. Ser-1859 is modified (phosphoserine). Lys-1874 is covalently cross-linked (Glycyl lysine isopeptide (Lys-Gly) (interchain with G-Cter in SUMO2)). Phosphothreonine is present on Thr-1884. Position 1904 is a phosphoserine (Ser-1904). The segment covering 1907–1920 has biased composition (polar residues); sequence HQKQPQRGEVSQKT. A Glycyl lysine isopeptide (Lys-Gly) (interchain with G-Cter in SUMO1); alternate cross-link involves residue Lys-1924. Residue Lys-1924 forms a Glycyl lysine isopeptide (Lys-Gly) (interchain with G-Cter in SUMO2); alternate linkage. Over residues 1931 to 1941 the composition is skewed to basic and acidic residues; that stretch reads AEKPGKEEDVM. Thr-1942 is modified (phosphothreonine). 2 BRCT domains span residues 1976 to 2054 and 2075 to 2166; these read APKV…EYVV and RERR…FVLS. Arg-2027 is modified (omega-N-methylarginine).

Homodimer. Interacts with H2AX, which requires phosphorylation of H2AX on 'Ser-139'. Interacts with the MRN complex, composed of MRE11, RAD50, and NBN. Interacts with CHEK2, which requires ATM-mediated phosphorylation of 'Thr-68' within the FHA domain of CHEK2. Interacts constitutively with the BRCA1-BARD1 complex, SMC1A and TP53BP1. Interacts with ATM and FANCD2, and these interactions are reduced upon DNA damage. Also interacts with the PRKDC complex, composed of XRCC6/KU70, XRCC5/KU80 and PRKDC/XRCC7. This interaction may be required for PRKDC autophosphorylation, which is essential for DNA double strand break (DSB) repair. When phosphorylated by ATM, interacts with RNF8 (via FHA domain). Interacts with CEP164. When phosphorylated, interacts with APTX (via FHA-like domain). Interacts (when phosphorylated) with TOPBP1; promoting TOPBP1 localization to DNA damage sites during mitosis. Interacts (when phosphorylated) with NBN; promoting NBN and MRN complex localization to DNA damage sites. Phosphorylated upon exposure to ionizing radiation (IR), ultraviolet radiation (UV), and hydroxyurea (HU). Phosphorylation in response to IR requires ATM, NBN, and possibly CHEK2. Also phosphorylated during the G2/M phase of the cell cycle and during activation of the mitotic spindle checkpoint. Phosphorylation at Thr-4 by ATM stabilizes and enhances homodimerization via the FHA domain. Phosphorylated at Ser-168 and Ser-198 by CK2 in response to DNA damage during mitosis, promoting interaction with TOPBP1. Phosphorylated by CK2 in response to DNA damage, promoting interaction with NBN and recruitment of the MRN complex to DNA damage sites. Post-translationally, sumoylation at Lys-1924 by PIAS4 following DNA damage promotes ubiquitin-mediated degradation. In terms of processing, ubiquitinated by RNF4, leading to proteasomal degradation; undergoes 'Lys-48'-linked polyubiquitination.

It localises to the nucleus. The protein resides in the chromosome. Functionally, histone reader protein required for checkpoint-mediated cell cycle arrest in response to DNA damage within both the S phase and G2/M phases of the cell cycle. Specifically recognizes and binds histone H2AX phosphorylated at 'Ser-139', a marker of DNA damage, serving as a scaffold for the recruitment of DNA repair and signal transduction proteins to discrete foci of DNA damage sites. Also required for downstream events subsequent to the recruitment of these proteins. These include phosphorylation and activation of the ATM, CHEK1 and CHEK2 kinases, and stabilization of TP53/p53 and apoptosis. ATM and CHEK2 may also be activated independently by a parallel pathway mediated by TP53BP1. Required for chromosomal stability during mitosis by promoting recruitment of TOPBP1 to DNA double strand breaks (DSBs): TOPBP1 forms filamentous assemblies that bridge MDC1 and tether broken chromosomes during mitosis. Required for the repair of DSBs via homologous recombination by promoting recruitment of NBN component of the MRN complex to DSBs. This Macaca mulatta (Rhesus macaque) protein is Mediator of DNA damage checkpoint protein 1 (MDC1).